We begin with the raw amino-acid sequence, 135 residues long: Large ribosomal subunit protein uL16c (135 aa).

This sequence belongs to the universal ribosomal protein uL16 family. As to quaternary structure, part of the 50S ribosomal subunit.

The protein localises to the plastid. The protein resides in the chloroplast. The protein is Large ribosomal subunit protein uL16c of Euglena gracilis.